The primary structure comprises 328 residues: Methionyl-tRNA formyltransferase (328 aa).

121 to 124 (SLLP) lines the (6S)-5,6,7,8-tetrahydrofolate pocket.

It belongs to the Fmt family.

It carries out the reaction L-methionyl-tRNA(fMet) + (6R)-10-formyltetrahydrofolate = N-formyl-L-methionyl-tRNA(fMet) + (6S)-5,6,7,8-tetrahydrofolate + H(+). Functionally, attaches a formyl group to the free amino group of methionyl-tRNA(fMet). The formyl group appears to play a dual role in the initiator identity of N-formylmethionyl-tRNA by promoting its recognition by IF2 and preventing the misappropriation of this tRNA by the elongation apparatus. The protein is Methionyl-tRNA formyltransferase of Burkholderia thailandensis (strain ATCC 700388 / DSM 13276 / CCUG 48851 / CIP 106301 / E264).